The chain runs to 238 residues: Capsular polysaccharide phosphotransferase eps5J (238 aa).

It belongs to the stealth family.

This chain is Capsular polysaccharide phosphotransferase eps5J (eps5J), found in Streptococcus thermophilus.